The following is a 383-amino-acid chain: 1-deoxy-D-xylulose 5-phosphate reductoisomerase (383 aa).

Residues T10, G11, S12, I13, and N123 each contribute to the NADPH site. K124 contacts 1-deoxy-D-xylulose 5-phosphate. Residue E125 coordinates NADPH. D149 is a binding site for Mn(2+). 4 residues coordinate 1-deoxy-D-xylulose 5-phosphate: S150, E151, S175, and H198. E151 lines the Mn(2+) pocket. Residue G204 participates in NADPH binding. 1-deoxy-D-xylulose 5-phosphate-binding residues include S211, N216, K217, and E220. E220 contributes to the Mn(2+) binding site.

The protein belongs to the DXR family. Requires Mg(2+) as cofactor. It depends on Mn(2+) as a cofactor.

It carries out the reaction 2-C-methyl-D-erythritol 4-phosphate + NADP(+) = 1-deoxy-D-xylulose 5-phosphate + NADPH + H(+). It functions in the pathway isoprenoid biosynthesis; isopentenyl diphosphate biosynthesis via DXP pathway; isopentenyl diphosphate from 1-deoxy-D-xylulose 5-phosphate: step 1/6. Its function is as follows. Catalyzes the NADPH-dependent rearrangement and reduction of 1-deoxy-D-xylulose-5-phosphate (DXP) to 2-C-methyl-D-erythritol 4-phosphate (MEP). The sequence is that of 1-deoxy-D-xylulose 5-phosphate reductoisomerase from Desulfosudis oleivorans (strain DSM 6200 / JCM 39069 / Hxd3) (Desulfococcus oleovorans).